The sequence spans 157 residues: Glucosamine 6-phosphate N-acetyltransferase 1 (157 aa).

Residues 9–157 enclose the N-acetyltransferase domain; that stretch reads ISFRPLDIDD…SIYLPTPPKL (149 aa). Residues T31, 78–81, and 90–92 contribute to the substrate site; these read KFIR and EDI. 100–105 is an acetyl-CoA binding site; that stretch reads GKNLGL. Residue 121–122 participates in substrate binding; the sequence is YK. 135–137 contributes to the acetyl-CoA binding site; it reads YEK.

This sequence belongs to the acetyltransferase family. GNA1 subfamily.

The catalysed reaction is D-glucosamine 6-phosphate + acetyl-CoA = N-acetyl-D-glucosamine 6-phosphate + CoA + H(+). Its pathway is nucleotide-sugar biosynthesis; UDP-N-acetyl-alpha-D-glucosamine biosynthesis; N-acetyl-alpha-D-glucosamine 1-phosphate from alpha-D-glucosamine 6-phosphate (route I): step 1/2. In Dictyostelium discoideum (Social amoeba), this protein is Glucosamine 6-phosphate N-acetyltransferase 1 (gna1).